The sequence spans 636 residues: Biosynthetic arginine decarboxylase (636 aa).

Residue Lys-110 is modified to N6-(pyridoxal phosphate)lysine. 290–300 contributes to the substrate binding site; sequence IDVGGGLGVDY.

The protein belongs to the Orn/Lys/Arg decarboxylase class-II family. SpeA subfamily. Requires Mg(2+) as cofactor. Pyridoxal 5'-phosphate is required as a cofactor.

The catalysed reaction is L-arginine + H(+) = agmatine + CO2. In terms of biological role, catalyzes the biosynthesis of agmatine from arginine. This is Biosynthetic arginine decarboxylase from Pseudomonas aeruginosa (strain ATCC 15692 / DSM 22644 / CIP 104116 / JCM 14847 / LMG 12228 / 1C / PRS 101 / PAO1).